A 149-amino-acid chain; its full sequence is D-aminoacyl-tRNA deacylase (149 aa).

Residues 137–138 (GP) carry the Gly-cisPro motif, important for rejection of L-amino acids motif.

This sequence belongs to the DTD family. As to quaternary structure, homodimer.

The protein resides in the cytoplasm. The enzyme catalyses glycyl-tRNA(Ala) + H2O = tRNA(Ala) + glycine + H(+). The catalysed reaction is a D-aminoacyl-tRNA + H2O = a tRNA + a D-alpha-amino acid + H(+). Functionally, an aminoacyl-tRNA editing enzyme that deacylates mischarged D-aminoacyl-tRNAs. Also deacylates mischarged glycyl-tRNA(Ala), protecting cells against glycine mischarging by AlaRS. Acts via tRNA-based rather than protein-based catalysis; rejects L-amino acids rather than detecting D-amino acids in the active site. By recycling D-aminoacyl-tRNA to D-amino acids and free tRNA molecules, this enzyme counteracts the toxicity associated with the formation of D-aminoacyl-tRNA entities in vivo and helps enforce protein L-homochirality. This chain is D-aminoacyl-tRNA deacylase, found in Clostridium botulinum (strain Loch Maree / Type A3).